A 598-amino-acid polypeptide reads, in one-letter code: Nuclear receptor subfamily 4immunitygroup A member 1 (598 aa).

4 disordered regions span residues 1-44, 131-158, 177-206, and 221-265; these read MPCI…EAAP, YYGS…DGSF, LPKA…AQSP, and GESY…GSEG. Residues 134–145 are compositionally biased toward low complexity; the sequence is SPCSAPSPSTPS. The interval 171 to 466 is required for nuclear import; sequence RAWTEQLPKA…PGEGKLIFCS (296 aa). The nuclear receptor DNA-binding region spans 264–339; that stretch reads EGRCAVCGDN…VGMVKEVVRT (76 aa). 2 NR C4-type zinc fingers span residues 267–287 and 303–327; these read CAVC…CEGC and CLAN…FQKC. The tract at residues 268-354 is required for binding NBRE-containing DNA; it reads AVCGDNASCQ…RRGRLPSKPK (87 aa). The interval 299–361 is required for the interaction with RXRA; the sequence is AKYICLANKD…KPKQPPDASP (63 aa). Residue Ser341 is modified to Phosphoserine; by PKA. A disordered region spans residues 341-361; the sequence is SLKGRRGRLPSKPKQPPDASP. A Phosphoserine modification is found at Ser351. Positions 360–595 constitute an NR LBD domain; sequence SPANLLTSLV…PIIDKIFMDT (236 aa). The segment at 521-544 is binds lipopolysaccharide; sequence PRRVEELQNRIASCLKEHVAAVAG. The segment at 584–595 is AF-2; sequence PPPIIDKIFMDT.

This sequence belongs to the nuclear hormone receptor family. NR4 subfamily. Binds the NGFI-B response element (NBRE) as a monomer. Binds the Nur response element (NurRE), consisting of two inverse NBRE-related octanucleotide repeats separated by 6 base-pairs, as a dimer. Interacts (via N-terminus) with NLRP3 (via LRR repeat domain); the interaction is direct, requires binding of NR4A1/Nur77 to NBRE-containing dsDNA and lipopolysaccharide, and leads to non-canonical NLRP3 inflammasome activation. Interacts with GADD45GIP1. Interacts with STK11. Interacts with IFI27. Heterodimer (via DNA-binding domain) with RXRA (via C-terminus); DNA-binding of the heterodimer is enhanced by 9-cis retinoic acid. Competes for the RXRA interaction with EP300 and thereby attenuates EP300 mediated acetylation of RXRA. Interacts with NCOA1. Interacts with NCOA2. Interacts with NCOA3. Zn(2+) is required as a cofactor. Phosphorylated at Ser-351 by RPS6KA1 and RPS6KA3 in response to mitogenic or stress stimuli. Post-translationally, acetylated by p300/CBP, acetylation increases stability. Deacetylated by HDAC1. In terms of tissue distribution, fetal muscle and adult liver, brain and thyroid.

It localises to the nucleus. The protein resides in the cytoplasm. The protein localises to the cytosol. It is found in the mitochondrion. With respect to regulation, its transcription factor activity is activated by binding cytosporone B (Csn-B) via its ligand-binding (NR LBD) domain and stimulates recruitment of coactivators NCOA1 and NCOA2, but not NCOA3, to promoters. Csn-B-binding is also accompanied by its translocation to the mitochondrion. Its transcription factor activity is activated by corticotropin-releasing hormone (CRH) and forskolin. Not activated by binding cytosporone C (Csn-C). Functionally, orphan nuclear receptor. Binds the NGFI-B response element (NBRE) 5'-AAAGGTCA-3'. Binds 9-cis-retinoic acid outside of its ligand-binding (NR LBD) domain. Participates in energy homeostasis by sequestrating the kinase STK11 in the nucleus, thereby attenuating cytoplasmic AMPK activation. Regulates the inflammatory response in macrophages by regulating metabolic adaptations during inflammation, including repressing the transcription of genes involved in the citric acid cycle (TCA). Inhibits NF-kappa-B signaling by binding to low-affinity NF-kappa-B binding sites, such as at the IL2 promoter. May act concomitantly with NR4A2 in regulating the expression of delayed-early genes during liver regeneration. Plays a role in the vascular response to injury. Its function is as follows. In the cytosol, upon its detection of both bacterial lipopolysaccharide (LPS) and NBRE-containing mitochondrial DNA released by GSDMD pores during pyroptosis, it promotes non-canonical NLRP3 inflammasome activation by stimulating association of NLRP3 and NEK7. This Homo sapiens (Human) protein is Nuclear receptor subfamily 4immunitygroup A member 1 (NR4A1).